Reading from the N-terminus, the 394-residue chain is GDSL esterase/lipase At1g31550 (394 aa).

The N-terminal stretch at 1–27 is a signal peptide; that stretch reads MASLDSHVLMKLGSLFLSTLFVSIVSS. Serine 43 (nucleophile) is an active-site residue. N-linked (GlcNAc...) asparagine glycosylation is found at asparagine 138, asparagine 290, and asparagine 322. Catalysis depends on residues aspartate 345 and histidine 348.

The protein belongs to the 'GDSL' lipolytic enzyme family.

The protein resides in the secreted. This Arabidopsis thaliana (Mouse-ear cress) protein is GDSL esterase/lipase At1g31550.